The sequence spans 940 residues: UvrABC system protein A (940 aa).

31–38 (GLSGSGKS) lines the ATP pocket. A C4-type zinc finger spans residues 253–280 (CPICGYSMRELEPRLFSFNNPAGACPTC). ABC transporter domains follow at residues 310–587 (WDRR…PESL) and 607–937 (ANPE…RFLK). 640 to 647 (GVSGSGKS) is an ATP binding site. Residues 740 to 766 (CEACQGDGVIKVEMHFLPDIYVPCDQC) form a C4-type zinc finger.

The protein belongs to the ABC transporter superfamily. UvrA family. As to quaternary structure, forms a heterotetramer with UvrB during the search for lesions.

The protein resides in the cytoplasm. Functionally, the UvrABC repair system catalyzes the recognition and processing of DNA lesions. UvrA is an ATPase and a DNA-binding protein. A damage recognition complex composed of 2 UvrA and 2 UvrB subunits scans DNA for abnormalities. When the presence of a lesion has been verified by UvrB, the UvrA molecules dissociate. This chain is UvrABC system protein A, found in Escherichia coli O6:H1 (strain CFT073 / ATCC 700928 / UPEC).